The sequence spans 414 residues: NFATC2-interacting protein (414 aa).

The tract at residues Met1–Ile42 is disordered. The span at Arg7 to Arg33 shows a compositional bias: basic residues. Ser52 and Ser54 each carry phosphoserine. A disordered region spans residues Ala63–Pro118. The segment covering Val68–Pro79 has biased composition (low complexity). A phosphoserine mark is found at Ser83, Ser85, and Ser87. A compositionally biased stretch (low complexity) spans Ala90–Thr100. Residue Ser121 is modified to Phosphoserine. Residue Lys123 forms a Glycyl lysine isopeptide (Lys-Gly) (interchain with G-Cter in SUMO2) linkage. The disordered stretch occupies residues Lys139–Thr208. Residues Lys170–Ser229 are a coiled coil. A phosphoserine mark is found at Ser193, Ser199, and Ser309. Thr311 and Thr313 each carry phosphothreonine. In terms of domain architecture, Ubiquitin-like spans Leu343–Gly414. Ser364 and Ser385 each carry phosphoserine.

In terms of assembly, interacts with NFATC2, TRAF1, TRAF2 and PRMT1. Interacts with UBE2I/UBC9. In terms of processing, methylation at the N-terminus by PRMT1 modulates interaction with the NFAT complex and results in augmented cytokine production.

The protein localises to the nucleus. It localises to the cytoplasm. Its function is as follows. In T-helper 2 (Th2) cells, regulates the magnitude of NFAT-driven transcription of a specific subset of cytokine genes, including IL3, IL4, IL5 and IL13, but not IL2. Recruits PRMT1 to the IL4 promoter; this leads to enhancement of histone H4 'Arg-3'-methylation and facilitates subsequent histone acetylation at the IL4 locus, thus promotes robust cytokine expression. Down-regulates formation of poly-SUMO chains by UBE2I/UBC9. This chain is NFATC2-interacting protein (Nfatc2ip), found in Rattus norvegicus (Rat).